The sequence spans 190 residues: Peptidyl-tRNA hydrolase (190 aa).

Phe-14 contacts tRNA. The active-site Proton acceptor is His-19. The tRNA site is built by Met-64, Asn-66, and Asn-112.

Belongs to the PTH family. As to quaternary structure, monomer.

It localises to the cytoplasm. It carries out the reaction an N-acyl-L-alpha-aminoacyl-tRNA + H2O = an N-acyl-L-amino acid + a tRNA + H(+). Functionally, hydrolyzes ribosome-free peptidyl-tRNAs (with 1 or more amino acids incorporated), which drop off the ribosome during protein synthesis, or as a result of ribosome stalling. In terms of biological role, catalyzes the release of premature peptidyl moieties from peptidyl-tRNA molecules trapped in stalled 50S ribosomal subunits, and thus maintains levels of free tRNAs and 50S ribosomes. The chain is Peptidyl-tRNA hydrolase from Staphylococcus haemolyticus (strain JCSC1435).